The sequence spans 177 residues: Large ribosomal subunit protein uL6 (177 aa).

Belongs to the universal ribosomal protein uL6 family. As to quaternary structure, part of the 50S ribosomal subunit.

Its function is as follows. This protein binds to the 23S rRNA, and is important in its secondary structure. It is located near the subunit interface in the base of the L7/L12 stalk, and near the tRNA binding site of the peptidyltransferase center. The polypeptide is Large ribosomal subunit protein uL6 (Rickettsia massiliae (strain Mtu5)).